Here is a 231-residue protein sequence, read N- to C-terminus: Uroporphyrinogen-III C-methyltransferase (231 aa).

Residues Pro10, 85–87 (GGD), 115–116 (TS), Met166, and Ala218 contribute to the S-adenosyl-L-homocysteine site.

Belongs to the precorrin methyltransferase family. In terms of assembly, homodimer.

It catalyses the reaction uroporphyrinogen III + 2 S-adenosyl-L-methionine = precorrin-2 + 2 S-adenosyl-L-homocysteine + H(+). The catalysed reaction is uroporphyrinogen III + S-adenosyl-L-methionine = precorrin-1 + S-adenosyl-L-homocysteine + H(+). It carries out the reaction precorrin-1 + S-adenosyl-L-methionine = precorrin-2 + S-adenosyl-L-homocysteine. It functions in the pathway cofactor biosynthesis; adenosylcobalamin biosynthesis; precorrin-2 from uroporphyrinogen III: step 1/1. With respect to regulation, does not show substrate inhibition at uroporphyrinogen III concentrations of up to 20 uM, in contrast to SUMT from Sinorhizobium (previously believed to be P.denitrificans). Its function is as follows. Catalyzes the two successive C-2 and C-7 methylation reactions involved in the conversion of uroporphyrinogen III to precorrin-2 via the intermediate formation of precorrin-1. It is a step in the biosynthesis of both cobalamin (vitamin B12) and coenzyme F430. The protein is Uroporphyrinogen-III C-methyltransferase (cobA) of Methanobacterium ivanovii.